A 311-amino-acid chain; its full sequence is Aspartate carbamoyltransferase catalytic subunit (311 aa).

Carbamoyl phosphate is bound by residues R55 and T56. K85 provides a ligand contact to L-aspartate. 3 residues coordinate carbamoyl phosphate: R106, H135, and Q138. Positions 168 and 230 each coordinate L-aspartate. Residues L268 and P269 each coordinate carbamoyl phosphate.

Belongs to the aspartate/ornithine carbamoyltransferase superfamily. ATCase family. Heterododecamer (2C3:3R2) of six catalytic PyrB chains organized as two trimers (C3), and six regulatory PyrI chains organized as three dimers (R2).

It catalyses the reaction carbamoyl phosphate + L-aspartate = N-carbamoyl-L-aspartate + phosphate + H(+). Its pathway is pyrimidine metabolism; UMP biosynthesis via de novo pathway; (S)-dihydroorotate from bicarbonate: step 2/3. Catalyzes the condensation of carbamoyl phosphate and aspartate to form carbamoyl aspartate and inorganic phosphate, the committed step in the de novo pyrimidine nucleotide biosynthesis pathway. In Citrobacter koseri (strain ATCC BAA-895 / CDC 4225-83 / SGSC4696), this protein is Aspartate carbamoyltransferase catalytic subunit.